The sequence spans 316 residues: Ribose-phosphate pyrophosphokinase (316 aa).

Residues 37 to 39 (DGE) and 96 to 97 (RQ) contribute to the ATP site. Residues H130 and D171 each contribute to the Mg(2+) site. K194 is an active-site residue. 2 residues coordinate D-ribose 5-phosphate: R196 and D221.

The protein belongs to the ribose-phosphate pyrophosphokinase family. Class I subfamily. In terms of assembly, homohexamer. Mg(2+) is required as a cofactor.

It is found in the cytoplasm. It carries out the reaction D-ribose 5-phosphate + ATP = 5-phospho-alpha-D-ribose 1-diphosphate + AMP + H(+). Its pathway is metabolic intermediate biosynthesis; 5-phospho-alpha-D-ribose 1-diphosphate biosynthesis; 5-phospho-alpha-D-ribose 1-diphosphate from D-ribose 5-phosphate (route I): step 1/1. Functionally, involved in the biosynthesis of the central metabolite phospho-alpha-D-ribosyl-1-pyrophosphate (PRPP) via the transfer of pyrophosphoryl group from ATP to 1-hydroxyl of ribose-5-phosphate (Rib-5-P). The chain is Ribose-phosphate pyrophosphokinase from Rhodopirellula baltica (strain DSM 10527 / NCIMB 13988 / SH1).